A 207-amino-acid polypeptide reads, in one-letter code: Ion-translocating oxidoreductase complex subunit G (207 aa).

A helical membrane pass occupies residues 11 to 31 (GILLGFIALLCTIISTGIFFL). Residue threonine 175 is modified to FMN phosphoryl threonine.

This sequence belongs to the RnfG family. In terms of assembly, the complex is composed of six subunits: RnfA, RnfB, RnfC, RnfD, RnfE and RnfG. It depends on FMN as a cofactor.

The protein localises to the cell inner membrane. In terms of biological role, part of a membrane-bound complex that couples electron transfer with translocation of ions across the membrane. The sequence is that of Ion-translocating oxidoreductase complex subunit G from Haemophilus influenzae (strain 86-028NP).